Consider the following 111-residue polypeptide: WAP four-disulfide core domain protein 12 (111 aa).

Positions 1–23 (MGSSSFLVLMVSLTLVTLVAVEG) are cleaved as a signal peptide. The WAP domain occupies 27–74 (DIEKAGVCPADNVRCFKSDPPQCHTDQDCLGERKCCYLHCGFKCVIPV). Cystine bridges form between C34–C62, C41–C66, C49–C61, and C55–C70. The tract at residues 80–111 (GGNKDEDVSRPYPEPGWEAKCPGSSSTRCPQK) is disordered. The segment covering 102–111 (GSSSTRCPQK) has biased composition (polar residues).

The protein resides in the secreted. Functionally, antibacterial protein. Putative acid-stable proteinase inhibitor. In Pan troglodytes (Chimpanzee), this protein is WAP four-disulfide core domain protein 12 (WFDC12).